The following is a 275-amino-acid chain: Phosphonoacetaldehyde hydrolase (275 aa).

Aspartate 15 serves as the catalytic Nucleophile. Positions 15 and 17 each coordinate Mg(2+). The active-site Schiff-base intermediate with substrate is lysine 56. Aspartate 189 serves as a coordination point for Mg(2+).

This sequence belongs to the HAD-like hydrolase superfamily. PhnX family. As to quaternary structure, homodimer. It depends on Mg(2+) as a cofactor.

It catalyses the reaction phosphonoacetaldehyde + H2O = acetaldehyde + phosphate + H(+). Its function is as follows. Involved in phosphonate degradation. This chain is Phosphonoacetaldehyde hydrolase, found in Pseudomonas fluorescens (strain SBW25).